We begin with the raw amino-acid sequence, 475 residues long: tRNA modification GTPase MnmE (475 aa).

Positions 24, 81, and 124 each coordinate (6S)-5-formyl-5,6,7,8-tetrahydrofolate. One can recognise a TrmE-type G domain in the interval 220–397 (GLSVVLAGQP…MRSELLRLIG (178 aa)). Asparagine 230 serves as a coordination point for K(+). GTP is bound by residues 230 to 235 (NVGKSS), 249 to 255 (TPIAGTT), 274 to 277 (DTAG), and 378 to 380 (SAR). Serine 234 provides a ligand contact to Mg(2+). 3 residues coordinate K(+): threonine 249, isoleucine 251, and threonine 254. Threonine 255 is a binding site for Mg(2+). Lysine 475 contacts (6S)-5-formyl-5,6,7,8-tetrahydrofolate.

This sequence belongs to the TRAFAC class TrmE-Era-EngA-EngB-Septin-like GTPase superfamily. TrmE GTPase family. As to quaternary structure, homodimer. Heterotetramer of two MnmE and two MnmG subunits. It depends on K(+) as a cofactor.

The protein localises to the cytoplasm. In terms of biological role, exhibits a very high intrinsic GTPase hydrolysis rate. Involved in the addition of a carboxymethylaminomethyl (cmnm) group at the wobble position (U34) of certain tRNAs, forming tRNA-cmnm(5)s(2)U34. This is tRNA modification GTPase MnmE from Cupriavidus metallidurans (strain ATCC 43123 / DSM 2839 / NBRC 102507 / CH34) (Ralstonia metallidurans).